The sequence spans 146 residues: UPF0178 protein Helmi_09130 (146 aa).

This sequence belongs to the UPF0178 family.

This Heliobacterium modesticaldum (strain ATCC 51547 / Ice1) protein is UPF0178 protein Helmi_09130.